A 479-amino-acid polypeptide reads, in one-letter code: Cobyric acid synthase (479 aa).

The region spanning 250–442 is the GATase cobBQ-type domain; the sequence is TRTVAVVAYP…LHGLFEDAAA (193 aa). Cysteine 331 acts as the Nucleophile in catalysis. Histidine 434 is an active-site residue.

It belongs to the CobB/CobQ family. CobQ subfamily.

It participates in cofactor biosynthesis; adenosylcobalamin biosynthesis. Its function is as follows. Catalyzes amidations at positions B, D, E, and G on adenosylcobyrinic A,C-diamide. NH(2) groups are provided by glutamine, and one molecule of ATP is hydrogenolyzed for each amidation. The protein is Cobyric acid synthase of Variovorax paradoxus (strain S110).